A 501-amino-acid polypeptide reads, in one-letter code: Ribose import ATP-binding protein RbsA (501 aa).

2 ABC transporter domains span residues 8-245 (LKMV…VGRT) and 255-500 (VKKG…VGIN). Residue 40–47 (GENGAGKS) coordinates ATP.

It belongs to the ABC transporter superfamily. Ribose importer (TC 3.A.1.2.1) family. The complex is composed of an ATP-binding protein (RbsA), two transmembrane proteins (RbsC) and a solute-binding protein (RbsB).

Its subcellular location is the cell membrane. The enzyme catalyses D-ribose(out) + ATP + H2O = D-ribose(in) + ADP + phosphate + H(+). In terms of biological role, part of the ABC transporter complex RbsABC involved in ribose import. Responsible for energy coupling to the transport system. The sequence is that of Ribose import ATP-binding protein RbsA from Clostridium perfringens (strain SM101 / Type A).